Here is a 304-residue protein sequence, read N- to C-terminus: L-threonate dehydrogenase (304 aa).

Residues 7–35 (YAVA…TYGV) and threonine 102 each bind NAD(+). Residue lysine 178 is part of the active site. Lysine 246 lines the NAD(+) pocket.

It belongs to the HIBADH-related family. L-threonate dehydrogenase subfamily.

It catalyses the reaction L-threonate + NAD(+) = 2-dehydro-L-erythronate + NADH + H(+). In terms of biological role, catalyzes oxidation of L-threonate to 2-oxo-tetronate. Can use either NAD(+) or NADP(+) as cosubstrate, with a preference for NAD(+). The sequence is that of L-threonate dehydrogenase from Pectobacterium atrosepticum (strain SCRI 1043 / ATCC BAA-672) (Erwinia carotovora subsp. atroseptica).